The following is a 189-amino-acid chain: UPF0301 protein RF_0044 (189 aa).

Belongs to the UPF0301 (AlgH) family.

This chain is UPF0301 protein RF_0044, found in Rickettsia felis (strain ATCC VR-1525 / URRWXCal2) (Rickettsia azadi).